The chain runs to 232 residues: MDLPIQDSHDSSTSPKGKQPTTAEKSATKKEDKVPVKKQKTRTVFSSTQLCVLNDRFQRQKYLSLQQMQELSNILNLSYKQVKTWFQNQRMKSKRWQKNNWLKNSNGVTQGCLVNPTGNLPMWSNQTWNNSTWSNQTQNIQSWSNHSWNTQTWCTQSWNNQAWNSPFYNCGEESLQSCMQFQPNSPASDLQAALEAAGEGLNVIQQTTRYFNTPQTMDLFLNYSMNMQPEDV.

The segment at Met1–Gln39 is disordered. The span at Ser11–Lys25 shows a compositional bias: polar residues. Residues Ser26–Pro35 show a composition bias toward basic and acidic residues. 8 tandem repeats follow at residues Trp123–Thr127, Trp128–Thr132, Trp133–Thr137, Trp143–Ser147, Trp148–Thr152, Trp153–Ser157, Trp158–Ala162, and Trp163–Phe167. Residues Trp123–Phe167 form an 8 X repeats starting with a Trp in each unit region. The segment at Trp123 to Phe167 is sufficient for transactivation activity. Residues Tyr168–Val232 are sufficient for strong transactivation activity.

Belongs to the Nanog homeobox family.

It is found in the nucleus. Its function is as follows. Probable transcriptional regulator. In Homo sapiens (Human), this protein is Putative homeobox protein NANOG2 (NANOGP1).